Reading from the N-terminus, the 157-residue chain is Protein NrdI (157 aa).

It belongs to the NrdI family.

In terms of biological role, probably involved in ribonucleotide reductase function. The chain is Protein NrdI from Mycoplasma capricolum subsp. capricolum (strain California kid / ATCC 27343 / NCTC 10154).